A 236-amino-acid chain; its full sequence is Ubiquinone biosynthesis O-methyltransferase (236 aa).

Residues R39, G59, D80, and M124 each coordinate S-adenosyl-L-methionine.

This sequence belongs to the methyltransferase superfamily. UbiG/COQ3 family.

It catalyses the reaction a 3-demethylubiquinol + S-adenosyl-L-methionine = a ubiquinol + S-adenosyl-L-homocysteine + H(+). The enzyme catalyses a 3-(all-trans-polyprenyl)benzene-1,2-diol + S-adenosyl-L-methionine = a 2-methoxy-6-(all-trans-polyprenyl)phenol + S-adenosyl-L-homocysteine + H(+). It participates in cofactor biosynthesis; ubiquinone biosynthesis. Its function is as follows. O-methyltransferase that catalyzes the 2 O-methylation steps in the ubiquinone biosynthetic pathway. This chain is Ubiquinone biosynthesis O-methyltransferase, found in Shewanella oneidensis (strain ATCC 700550 / JCM 31522 / CIP 106686 / LMG 19005 / NCIMB 14063 / MR-1).